The primary structure comprises 941 residues: Replicative DNA helicase DnaB (941 aa).

Residues 1 to 25 (MAEFEERPRLSIGEEEAPPYPLEKL) form a disordered region. The 271-residue stretch at 214-484 (RPGGITGVPS…PVYRLTTRLG (271 aa)) folds into the SF4 helicase; first part domain. Residue 245-252 (ARPSMGKT) coordinates ATP. In terms of domain architecture, DOD-type homing endonuclease spans 534-683 (LLGHLIGDGC…VQSLLLRLGI (150 aa)). The SF4 helicase; second part domain maps to 646–915 (DGCIQMRRGK…ARFENLTMYQ (270 aa)). The disordered stretch occupies residues 914-941 (YQPEPGTPLPETPDETILPSGPPDEAPF).

The protein belongs to the helicase family. DnaB subfamily. As to quaternary structure, homohexamer. In terms of processing, upon expression in E.coli this protein undergoes self splicing that involves a post-translational excision of the intervening region (intein) followed by peptide ligation.

It catalyses the reaction Couples ATP hydrolysis with the unwinding of duplex DNA at the replication fork by translocating in the 5'-3' direction. This creates two antiparallel DNA single strands (ssDNA). The leading ssDNA polymer is the template for DNA polymerase III holoenzyme which synthesizes a continuous strand.. It carries out the reaction ATP + H2O = ADP + phosphate + H(+). The main replicative DNA helicase, it participates in initiation and elongation during chromosome replication. Travels ahead of the DNA replisome, separating dsDNA into templates for DNA synthesis. A processive ATP-dependent 5'-3' DNA helicase it has DNA-dependent ATPase activity. Functionally, the intein is an endonuclease. The chain is Replicative DNA helicase DnaB from Rhodothermus marinus (Rhodothermus obamensis).